A 197-amino-acid chain; its full sequence is Peptidoglycan-recognition protein 1 (197 aa).

An N-terminal signal peptide occupies residues 1–23 (MKLATITFFLLTEIFFYISYAEA). 2 disulfide bridges follow: Cys-31-Cys-154 and Cys-68-Cys-74. The region spanning 53 to 180 (KPLERVVIHH…RNVKATKSPG (128 aa)) is the N-acetylmuramoyl-L-alanine amidase domain.

It belongs to the N-acetylmuramoyl-L-alanine amidase 2 family. In terms of tissue distribution, localizes to plasma (at protein level).

The protein resides in the secreted. In terms of biological role, peptidoglycan-recognition protein probably involved in innate immunity by binding to peptidoglycans (PGN) of bacteria and activating the prophenoloxidase (proPO) cascade immune response. Binds to 1,3-beta-D-glucan and PGN. In Holotrichia diomphalia (Korean black chafer), this protein is Peptidoglycan-recognition protein 1 (PGRP-1).